The sequence spans 62 residues: Inner membrane protein p12 (62 aa).

Residues 16-36 traverse the membrane as a helical segment; that stretch reads LLIVAIVVVIMAIMLYYFWWM.

The protein belongs to the asfivirus inner membrane protein p12 family. As to quaternary structure, homomultimer; disulfide-linked. In terms of processing, not glycosylated.

It is found in the virion membrane. The chain is Inner membrane protein p12 from African swine fever virus (isolate Pig/Kenya/KEN-50/1950) (ASFV).